The chain runs to 349 residues: Anthranilate phosphoribosyltransferase (349 aa).

Residues Gly82, 85 to 86, 92 to 95, 110 to 118, and Ser122 each bind 5-phospho-alpha-D-ribose 1-diphosphate; these read GD, NVST, and KHGNRAVSG. Residue Gly82 participates in anthranilate binding. Ser94 contacts Mg(2+). Asn113 serves as a coordination point for anthranilate. Anthranilate is bound at residue Arg168. Mg(2+) contacts are provided by Asp227 and Glu228.

It belongs to the anthranilate phosphoribosyltransferase family. In terms of assembly, homodimer. It depends on Mg(2+) as a cofactor.

It carries out the reaction N-(5-phospho-beta-D-ribosyl)anthranilate + diphosphate = 5-phospho-alpha-D-ribose 1-diphosphate + anthranilate. The protein operates within amino-acid biosynthesis; L-tryptophan biosynthesis; L-tryptophan from chorismate: step 2/5. Catalyzes the transfer of the phosphoribosyl group of 5-phosphorylribose-1-pyrophosphate (PRPP) to anthranilate to yield N-(5'-phosphoribosyl)-anthranilate (PRA). In Pseudomonas putida (Arthrobacter siderocapsulatus), this protein is Anthranilate phosphoribosyltransferase.